Consider the following 370-residue polypeptide: Protein-tyrosine sulfotransferase 1 (370 aa).

Residues 1 to 8 lie on the Cytoplasmic side of the membrane; that stretch reads MVGKLKQN. The helical; Signal-anchor for type II membrane protein transmembrane segment at 9-25 threads the bilayer; the sequence is LLLACLVISSVTVFYLG. Residues 26–370 are Lumenal-facing; the sequence is QHAMECHHRI…KEKPQTEQVE (345 aa). N60 is a glycosylation site (N-linked (GlcNAc...) asparagine). A 3'-phosphoadenylyl sulfate-binding site is contributed by 79 to 83; that stretch reads RSGTT. C97 and C157 are oxidised to a cystine. E100 (proton donor/acceptor) is an active-site residue. The interval 102–106 is interaction with peptide substrate; sequence RVIPR. Residues R184, S192, and R196 each contribute to the 3'-phosphoadenylyl sulfate site. C226 and C234 are oxidised to a cystine. Position 239 (Y239) interacts with 3'-phosphoadenylyl sulfate. An N-linked (GlcNAc...) asparagine glycan is attached at N262. 3'-phosphoadenylyl sulfate contacts are provided by residues 286–295 and K301; that span reads STDQVIKPVN.

This sequence belongs to the protein sulfotransferase family. Homodimer. Can also form heterodimers with TPST2. In terms of processing, N-glycosylated.

The protein resides in the golgi apparatus membrane. The catalysed reaction is L-tyrosyl-[protein] + 3'-phosphoadenylyl sulfate = O-sulfo-L-tyrosine-[protein] + adenosine 3',5'-bisphosphate + H(+). In terms of biological role, catalyzes the O-sulfation of tyrosine residues within acidic motifs of polypeptides, using 3'-phosphoadenylyl sulfate (PAPS) as cosubstrate. In Rattus norvegicus (Rat), this protein is Protein-tyrosine sulfotransferase 1 (Tpst1).